A 458-amino-acid polypeptide reads, in one-letter code: MTLLTHVLACLFGMGSWVAINGIWVELPLIVPEIPEGWYLPSYLTVLIQMANVGPLFVTLMHRFRPGKLDERPVIYSIVGLGVVATFLLAFFWKHTVPLAGATHSVPLLVLCFLLSVVDCTSSVTFLPFMMRLGPQYLTTYFVGEGVSGLVPAVVALVQGVGVVHCRNATVASLANGTLGVNSTVGASGELQAQYQPANFSAQVFFLFLSAMMVVCLAAFLLLNHHPAVAREKKCEQYFNGGLAEEKSDQALSLSHRPQEEKPMISSPDSHRRARQSSFGTGFYSGPELAFIFVVLAWVNALTNAVLPSVQSYSCLPYGNQAYHLAATMAAVANPVACFIAMFLPLRSLVLIGLLTIVGTGFGTYIMAMATLSPCPLLVHSASGTTLIVIAWVLFVLTLSYVKVIIGVILRDEGHSALVWCGAVVQLGSMLGALSMFPLVSVYGLFKSGDPCNTKCTK.

5 helical membrane passes run 11–31, 38–58, 73–93, 97–117, and 146–166; these read LFGM…PLIV, WYLP…PLFV, PVIY…AFFW, VPLA…LLSV, and GVSG…VVHC. 4 N-linked (GlcNAc...) asparagine glycosylation sites follow: asparagine 168, asparagine 176, asparagine 182, and asparagine 199. Residues 204 to 224 traverse the membrane as a helical segment; that stretch reads VFFLFLSAMMVVCLAAFLLLN. The interval 249-274 is disordered; it reads DQALSLSHRPQEEKPMISSPDSHRRA. 5 helical membrane-spanning segments follow: residues 279–299, 325–345, 349–369, 388–408, and 417–437; these read FGTG…LAWV, LAAT…MFLP, LVLI…IMAM, IVIA…IIGV, and ALVW…LSMF.

It belongs to the riboflavin transporter family.

The protein resides in the cell membrane. It carries out the reaction riboflavin(in) = riboflavin(out). Plasma membrane transporter mediating the uptake by cells of the water soluble vitamin B2/riboflavin that plays a key role in biochemical oxidation-reduction reactions of the carbohydrate, lipid, and amino acid metabolism. This is Riboflavin transporter 2 (rft2) from Salmo salar (Atlantic salmon).